Here is a 147-residue protein sequence, read N- to C-terminus: MENLEKKIELLKKIREFLILNLEIKKLMQELNVDSDIYEAYEKVTKIVREPNIKLYRQYYDAIKEMFYEEYGKKRKDISWYPKIDYNRCKNCEKCISFCPRGVYDAENGKVVVKYPYSCIVNCNACSIMCCENNAIIFPDEKIPRRN.

2 4Fe-4S ferredoxin-type domains span residues tryptophan 80–glycine 109 and lysine 110–glutamate 141. Residues cysteine 89, cysteine 92, cysteine 95, cysteine 99, cysteine 119, cysteine 123, cysteine 126, and cysteine 130 each coordinate [4Fe-4S] cluster.

It depends on [4Fe-4S] cluster as a cofactor.

This is an uncharacterized protein from Methanocaldococcus jannaschii (strain ATCC 43067 / DSM 2661 / JAL-1 / JCM 10045 / NBRC 100440) (Methanococcus jannaschii).